The primary structure comprises 709 residues: Fatty acid oxidation complex subunit alpha (709 aa).

Residues 1–188 (MEKTFNLTRR…KMGLVNDVVP (188 aa)) form an enoyl-CoA hydratase region. The interval 308 to 709 (RKVKKAVILG…AMAAEKARFF (402 aa)) is 3-hydroxyacyl-CoA dehydrogenase.

In the N-terminal section; belongs to the enoyl-CoA hydratase/isomerase family. It in the central section; belongs to the 3-hydroxyacyl-CoA dehydrogenase family. As to quaternary structure, heterotetramer of two alpha chains (FadJ) and two beta chains (FadI).

The protein resides in the cytoplasm. It carries out the reaction a (3S)-3-hydroxyacyl-CoA = a (2E)-enoyl-CoA + H2O. The enzyme catalyses a 4-saturated-(3S)-3-hydroxyacyl-CoA = a (3E)-enoyl-CoA + H2O. It catalyses the reaction a (3S)-3-hydroxyacyl-CoA + NAD(+) = a 3-oxoacyl-CoA + NADH + H(+). The catalysed reaction is (3S)-3-hydroxybutanoyl-CoA = (3R)-3-hydroxybutanoyl-CoA. The protein operates within lipid metabolism; fatty acid beta-oxidation. Catalyzes the formation of a hydroxyacyl-CoA by addition of water on enoyl-CoA. Also exhibits 3-hydroxyacyl-CoA epimerase and 3-hydroxyacyl-CoA dehydrogenase activities. This is Fatty acid oxidation complex subunit alpha from Shewanella sp. (strain ANA-3).